A 372-amino-acid polypeptide reads, in one-letter code: Phospho-N-acetylmuramoyl-pentapeptide-transferase (372 aa).

Transmembrane regions (helical) follow at residues 25–45 (RSLL…PVMI), 73–93 (TMGG…WADL), 98–118 (VWIV…DDWI), 134–154 (FFWT…IAQN), 176–196 (SIPL…YLVI), 211–231 (GLAI…AYLA), 251–271 (LVVI…YNAH), 275–295 (IFMG…IAVM), 300–320 (IVFA…FLQI), and 349–369 (QVVT…LMTL).

It belongs to the glycosyltransferase 4 family. MraY subfamily. It depends on Mg(2+) as a cofactor.

It localises to the cell inner membrane. It carries out the reaction UDP-N-acetyl-alpha-D-muramoyl-L-alanyl-gamma-D-glutamyl-meso-2,6-diaminopimeloyl-D-alanyl-D-alanine + di-trans,octa-cis-undecaprenyl phosphate = di-trans,octa-cis-undecaprenyl diphospho-N-acetyl-alpha-D-muramoyl-L-alanyl-D-glutamyl-meso-2,6-diaminopimeloyl-D-alanyl-D-alanine + UMP. Its pathway is cell wall biogenesis; peptidoglycan biosynthesis. Its function is as follows. Catalyzes the initial step of the lipid cycle reactions in the biosynthesis of the cell wall peptidoglycan: transfers peptidoglycan precursor phospho-MurNAc-pentapeptide from UDP-MurNAc-pentapeptide onto the lipid carrier undecaprenyl phosphate, yielding undecaprenyl-pyrophosphoryl-MurNAc-pentapeptide, known as lipid I. This is Phospho-N-acetylmuramoyl-pentapeptide-transferase from Acinetobacter baylyi (strain ATCC 33305 / BD413 / ADP1).